The chain runs to 371 residues: MPITQYKAAAVTSEPCWFDLEAGVQKTISFINEAGQAGSKLIAFPEVWIPGYPYWMWKVTYQQSLPLLKSYRENSLPVDSEEMRRIRRAARDNHIYVSMGFSEIDHATLYLSQVLISPTGDVLNHRRKIKPTHVEKLVYGDGDGDTFLSVVDTDLGRLGQLNCWENMNPFLKSLNIAMGEQIHIAAWPVYPGKETLKYPDPATNVAEPASDIVTPAYALETATWTLAPFQRLSVEGLKKNTPAGMEPETDPSTYNGHARIYRPDGSLVVKPDKDFDGLLYVDIDLNESHLTKALGDFASGHYMRPDLIRLLVDTRRKELVTEADPDGGVATYSTRERLGLNRPLDPPKDERHGIVGVAGQKSAEQRKAGDL.

Residues 6-285 (YKAAAVTSEP…DGLLYVDIDL (280 aa)) form the CN hydrolase domain. Glu46 (proton acceptor) is an active-site residue. The active site involves Lys128. The active-site Nucleophile is the Cys163. Positions 339–353 (GLNRPLDPPKDERHG) are enriched in basic and acidic residues. The interval 339-371 (GLNRPLDPPKDERHGIVGVAGQKSAEQRKAGDL) is disordered.

This sequence belongs to the carbon-nitrogen hydrolase superfamily. Nitrilase family. As to quaternary structure, oligomer of dimers, forming left-handed helical fibers.

It catalyses the reaction formamide = hydrogen cyanide + H2O. Functionally, catalyzes the hydration of cyanide to formamide. Degradation of cyanide may be important for plant pathogenic fungi in infection of cyanogenic plants. Also acts on 2-cyanopyridine, fumaronitrile and benzonitrile, albeit at a lower rate. The polypeptide is Cyanide hydratase (nit) (Stereum hirsutum (strain FP-91666) (White-rot fungus)).